The following is a 507-amino-acid chain: Cobyric acid synthase (507 aa).

In terms of domain architecture, GATase cobBQ-type spans 273 to 468; it reads RPVIAVIAYP…LHGMFEDPAV (196 aa). The Nucleophile role is filled by cysteine 354. The active site involves histidine 460.

The protein belongs to the CobB/CobQ family. CobQ subfamily.

It participates in cofactor biosynthesis; adenosylcobalamin biosynthesis. Catalyzes amidations at positions B, D, E, and G on adenosylcobyrinic A,C-diamide. NH(2) groups are provided by glutamine, and one molecule of ATP is hydrogenolyzed for each amidation. The chain is Cobyric acid synthase from Polaromonas sp. (strain JS666 / ATCC BAA-500).